The following is a 618-amino-acid chain: DELLA protein SLN1 (618 aa).

Residues 1-36 form a disordered region; that stretch reads MKREYQDGGGSGGGGDEMGSSRDKMMVSSSEAGEGE. Residues 7–17 show a composition bias toward gly residues; the sequence is DGGGSGGGGDE. Positions 39 to 43 match the DELLA motif motif; the sequence is DELLA. Disordered stretches follow at residues 106-137 and 159-197; these read LNAP…YFDL and APAD…GAAR. A compositionally biased stretch (pro residues) spans 108-118; the sequence is APPPPLPPAPP. 2 stretches are compositionally biased toward low complexity: residues 119-128 and 176-197; these read QLNASTSSTV and TGGS…GAAR. Residues 221–614 enclose the GRAS domain; sequence VDTQEAGIRL…RPLIATSAWR (394 aa). Residues 228–284 are leucine repeat I (LRI); the sequence is IRLVHALLACAEAVQQENLSAAEALVKQIPLLAASQGGAMRKVAAYFGEALARRVFR. Positions 235–239 match the LxCxE motif motif; sequence LACAE. The interval 303-368 is VHIID; it reads HAHFYESCPY…GGPPSFRLTG (66 aa). The short motif at 334–338 is the VHIID element; that stretch reads VHVVD. Residues 382–421 are leucine repeat II (LRII); the sequence is QVGWKLAQFAHTIRVDFQYRGLVAATLADLEPFMLQPEGE. A PFYRE region spans residues 431-535; that stretch reads IAVNSVFEMH…EVYLGRQICN (105 aa). The tract at residues 538-614 is SAW; that stretch reads ACEGTERTER…RPLIATSAWR (77 aa).

The protein belongs to the GRAS family. DELLA subfamily. Post-translationally, phosphorylated. In terms of processing, ubiquitinated. Upon GA application it is ubiquitinated, leading to its subsequent degradation. As to expression, apparently restricted to regions where growth is occurring in the leaf blade. Localizes almost exclusively to the basal elongation zone (EZ) for the elongating blades of L1, L2 and L3. More detailed fractionation of the L3 blade shows that in cv. Himalaya, it is preferentially localized to the basal third of the EZ, but its presence can still be detected toward the end of the EZ (at protein level).

The protein localises to the nucleus. Its function is as follows. Probable transcriptional regulator that acts as a repressor of the gibberellin (GA) signaling pathway. Probably acts by participating in large multiprotein complexes that repress transcription of GA-inducible genes. Upon GA application, it is degraded by the proteasome, allowing the GA signaling pathway. Acts as a negative regulator of GAMYB gene expression. In Hordeum vulgare (Barley), this protein is DELLA protein SLN1 (SLN1).